Reading from the N-terminus, the 401-residue chain is MRLKHLPSEFQEALPVLEKIKAAGFEAYFVGGSVRDVLLGHPIHDVDIASSSYPEETKKIFPRTVDIGIEHGTVLVLENGHDYEVTTFRTEDLYVDYRRPSQVSFVRSLEEDLKRRDFTINAFALDEKANIIDKFNGLVDLEQKILRAVGNAAERFNEDALRIMRGLRFAAQLNFDIEKKTFIAMREHAPLLEKISVERSFIEFDKLLRAPYWRKGINCLIASQAYDYLPLLQSTADKWQQLLTDLPEDFTFSTSEQAWAAVLLYLNVENPRSFLKSWKTSNDFQKTVEKLLAIYRLREDRQIKKTDVYQYSATLLTLVEELRQAQGLAVDFEHIKELDEALTIHDKHEIVVKGGDLMAAFDLKPGPDLGKILNQIESFIVAGNLANERQAILDFVRKEID.

ATP-binding residues include glycine 32 and arginine 35. The CTP site is built by glycine 32 and arginine 35. Residues aspartate 45 and aspartate 47 each coordinate Mg(2+). Positions 116, 159, 162, 165, and 168 each coordinate ATP. Arginine 116, aspartate 159, arginine 162, arginine 165, and arginine 168 together coordinate CTP.

It belongs to the tRNA nucleotidyltransferase/poly(A) polymerase family. Bacterial CCA-adding enzyme type 3 subfamily. As to quaternary structure, homodimer. Mg(2+) serves as cofactor.

It catalyses the reaction a tRNA precursor + 2 CTP + ATP = a tRNA with a 3' CCA end + 3 diphosphate. The enzyme catalyses a tRNA with a 3' CCA end + 2 CTP + ATP = a tRNA with a 3' CCACCA end + 3 diphosphate. Catalyzes the addition and repair of the essential 3'-terminal CCA sequence in tRNAs without using a nucleic acid template. Adds these three nucleotides in the order of C, C, and A to the tRNA nucleotide-73, using CTP and ATP as substrates and producing inorganic pyrophosphate. tRNA 3'-terminal CCA addition is required both for tRNA processing and repair. Also involved in tRNA surveillance by mediating tandem CCA addition to generate a CCACCA at the 3' terminus of unstable tRNAs. While stable tRNAs receive only 3'-terminal CCA, unstable tRNAs are marked with CCACCA and rapidly degraded. This Streptococcus mutans serotype c (strain ATCC 700610 / UA159) protein is CCA-adding enzyme.